A 66-amino-acid polypeptide reads, in one-letter code: Large ribosomal subunit protein uL29 (66 aa).

The protein belongs to the universal ribosomal protein uL29 family.

This is Large ribosomal subunit protein uL29 from Borreliella burgdorferi (strain ZS7) (Borrelia burgdorferi).